The following is a 450-amino-acid chain: Nuclear hormone receptor family member nhr-40 (450 aa).

Residues 28–103 (GTLCVVCSDF…MGMDPKAIQH (76 aa)) constitute a DNA-binding region (nuclear receptor). NR C4-type zinc fingers lie at residues 31-51 (CVVCSDFASGIHYSVASCNGC) and 67-91 (CQFSGDCVVGKSVRCVCRSCRLKKC). Residues 173-450 (DVKAVIEDLL…LIDQLIIVGL (278 aa)) form the NR LBD domain.

This sequence belongs to the nuclear hormone receptor family. Isoform b: Expressed in body wall muscle cells, pharyngeal muscles, rectal gland cells, vulval and uterine muscles and neurons in the head and ventral nerve cord. Isoform c: Expressed in body wall muscle cells, neurons in the head, nerve ring, ventral and dorsal nerve cords and epidermal cells in the tail.

Its subcellular location is the nucleus. Its function is as follows. Orphan nuclear receptor. Plays a role in morphogenesis and elongation during embryonic and larval development. Plays a role in muscle formation and motility. The chain is Nuclear hormone receptor family member nhr-40 from Caenorhabditis elegans.